The chain runs to 484 residues: Putative cysteine ligase BshC (484 aa).

Residues 372 to 435 are a coiled coil; the sequence is RAFRDRVEGL…AARDEVLARH (64 aa).

Belongs to the BshC family.

The protein is Putative cysteine ligase BshC of Thermus thermophilus (strain ATCC 27634 / DSM 579 / HB8).